The sequence spans 406 residues: UPF0754 membrane protein SYNPCC7002_A1087 (406 aa).

A helical membrane pass occupies residues 384–404 (IVNLGGVLGFLVGVAQSVILL).

Belongs to the UPF0754 family.

It is found in the cell inner membrane. The sequence is that of UPF0754 membrane protein SYNPCC7002_A1087 from Picosynechococcus sp. (strain ATCC 27264 / PCC 7002 / PR-6) (Agmenellum quadruplicatum).